A 242-amino-acid chain; its full sequence is MANYYEVLGVQVQRFPEDIKKAYRKLALKWHPDKNPDNKEEAERRFKQVAEAYEVLSDAKKRDVYDRYGEAGAEGSCAVGRPFEDPFEYIFSFRDPAEVFREFFGGQDPFSFDFFGNPLENILGSRRNSRGSRSRGSAPLFSTFSEFPAFGGGFSSFDTGFSSFGSLGSGGLSSFWMSYGSDGTGSFKSMSTSTEIVDGKKITTKRIIENGQERVEVEEDGEFSLKSFIINSKEQLLRIDTK.

Residues 1 to 69 (MANYYEVLGV…KKRDVYDRYG (69 aa)) enclose the J domain.

In terms of tissue distribution, testis specific.

In terms of biological role, may operate as a co-chaperone of the male germ cell- and haploid stage-specific Hsp70 proteins. This chain is DnaJ homolog subfamily B member 3 (DNAJB3), found in Macaca fuscata fuscata (Japanese macaque).